The sequence spans 149 residues: Inner membrane protein YfeZ (149 aa).

Over M1–R18 the chain is Cytoplasmic. The chain crosses the membrane as a helical span at residues L19–I39. Over A40–H58 the chain is Periplasmic. The helical transmembrane segment at D59–G79 threads the bilayer. Over R80–R89 the chain is Cytoplasmic. The helical transmembrane segment at V90–W110 threads the bilayer. Topologically, residues L111 to S115 are periplasmic. Residues V116 to T136 traverse the membrane as a helical segment. At N137–E149 the chain is on the cytoplasmic side.

It is found in the cell inner membrane. In Escherichia coli (strain K12), this protein is Inner membrane protein YfeZ (yfeZ).